The primary structure comprises 206 residues: Large ribosomal subunit protein uL4 (206 aa).

The disordered stretch occupies residues 48-78 (THSVKTRGHVSGGGAKPWRQKGTGRARAGSN).

It belongs to the universal ribosomal protein uL4 family. In terms of assembly, part of the 50S ribosomal subunit.

Its function is as follows. One of the primary rRNA binding proteins, this protein initially binds near the 5'-end of the 23S rRNA. It is important during the early stages of 50S assembly. It makes multiple contacts with different domains of the 23S rRNA in the assembled 50S subunit and ribosome. Forms part of the polypeptide exit tunnel. The protein is Large ribosomal subunit protein uL4 of Lawsonia intracellularis (strain PHE/MN1-00).